The following is a 199-amino-acid chain: MSVRATISDSKSDFHKEFPYVIPAIYRKLADELLVELHLLSHQKNFKKDSIFSTGLKEVFCKFTSGYKPSEHVTKLFDAICNCNGFNPTEINNSSEQLVSNAKSFTKEDLNSFLSKTNNDNKGYDYYSRINAIGIYKLVSEMPLFKEVKEEDLNKEINDISKSLGYQYSRVEKDISMYKSNIEKMKQALEIIALNLKTK.

Residues 167 to 198 adopt a coiled-coil conformation; sequence QYSRVEKDISMYKSNIEKMKQALEIIALNLKT.

Belongs to the THF1 family.

Its function is as follows. May be involved in photosynthetic membrane biogenesis. The protein is Protein Thf1 of Prochlorococcus marinus (strain NATL1A).